Reading from the N-terminus, the 538-residue chain is Syncytin-1 (538 aa).

The signal sequence occupies residues 1-20; that stretch reads MALPYHIFLFTVLLPSFTLT. The Extracellular portion of the chain corresponds to 21 to 443; the sequence is APPPCRCMTS…NTGPWGLLSQ (423 aa). N169 carries N-linked (GlcNAc...) asparagine glycosylation. Residues 186–189 carry the CXXC motif; sequence CWIC. 3 cysteine pairs are disulfide-bonded: C186-C189, C186-C405, and C397-C404. N-linked (GlcNAc...) asparagine glycans are attached at residues N208, N214, N234, N242, and N281. The tract at residues 320–340 is fusion peptide; the sequence is ILPFVIGAGVLGALGTGIGGI. The segment at 380–396 is immunosuppression; the sequence is LQNRRALDLLTAERGGT. The CX6CC motif lies at 397 to 405; the sequence is CLFLGEECC. N409 carries N-linked (GlcNAc...) asparagine glycosylation. The helical transmembrane segment at 444-464 threads the bilayer; it reads WMPWILPFLGPLAAIILLLLF. The interval 465-484 is essential for the fusiogenic function; that stretch reads GPCIFNLLVNFVSSRIEAVK. Topologically, residues 465–538 are cytoplasmic; sequence GPCIFNLLVN…LLRPNSAGSS (74 aa). The disordered stretch occupies residues 496–538; sequence KIYRRPLDRPASPRSDVNDIKGTPPEEILTAQPLLRPNSAGSS.

It belongs to the gamma type-C retroviral envelope protein family. HERV class-I W env subfamily. In terms of assembly, the mature envelope protein (Env) consists of a trimer of SU-TM heterodimers attached probably by a labile interchain disulfide bond. Interacts with the C-type lectin CD209/DC-SIGN. Specific enzymatic cleavages in vivo yield mature proteins. Envelope glycoproteins are synthesized as an inactive precursor that is heavily N-glycosylated and processed likely by furin in the Golgi to yield the mature SU and TM proteins. The cleavage site between SU and TM requires the minimal sequence [KR]-X-[KR]-R. In terms of processing, the CXXC motif is highly conserved across a broad range of retroviral envelope proteins. It is thought to participate in the formation of a labile disulfide bond possibly with the CX6CC motif present in the transmembrane protein.

The protein localises to the cell membrane. It is found in the virion. In terms of biological role, this endogenous retroviral envelope protein has retained its original fusogenic properties and participates in trophoblast fusion and the formation of a syncytium during placenta morphogenesis. May recognize and induce fusion through binding of SLC1A4 and SLC1A5. Functionally, endogenous envelope proteins may have kept, lost or modified their original function during evolution. Retroviral envelope proteins mediate receptor recognition and membrane fusion during early infection. The surface protein (SU) mediates receptor recognition, while the transmembrane protein (TM) acts as a class I viral fusion protein. The protein may have at least 3 conformational states: pre-fusion native state, pre-hairpin intermediate state, and post-fusion hairpin state. During viral and target cell membrane fusion, the coiled coil regions (heptad repeats) assume a trimer-of-hairpins structure, positioning the fusion peptide in close proximity to the C-terminal region of the ectodomain. The formation of this structure appears to drive apposition and subsequent fusion of membranes. The polypeptide is Syncytin-1 (ERVW-1) (Pan troglodytes (Chimpanzee)).